A 445-amino-acid chain; its full sequence is Tubulin beta-7 chain (445 aa).

Glutamine 11, glutamate 69, serine 138, glycine 142, threonine 143, glycine 144, asparagine 204, and asparagine 226 together coordinate GTP. Glutamate 69 is a Mg(2+) binding site. A disordered region spans residues 421–445; it reads EYQQYQDATAEDEEYEEEEEEEEET. The span at 429–445 shows a compositional bias: acidic residues; that stretch reads TAEDEEYEEEEEEEEET.

The protein belongs to the tubulin family. Dimer of alpha and beta chains. A typical microtubule is a hollow water-filled tube with an outer diameter of 25 nm and an inner diameter of 15 nM. Alpha-beta heterodimers associate head-to-tail to form protofilaments running lengthwise along the microtubule wall with the beta-tubulin subunit facing the microtubule plus end conferring a structural polarity. Microtubules usually have 13 protofilaments but different protofilament numbers can be found in some organisms and specialized cells. Mg(2+) is required as a cofactor.

The protein resides in the cytoplasm. It is found in the cytoskeleton. Functionally, tubulin is the major constituent of microtubules, a cylinder consisting of laterally associated linear protofilaments composed of alpha- and beta-tubulin heterodimers. Microtubules grow by the addition of GTP-tubulin dimers to the microtubule end, where a stabilizing cap forms. Below the cap, tubulin dimers are in GDP-bound state, owing to GTPase activity of alpha-tubulin. This Zea mays (Maize) protein is Tubulin beta-7 chain (TUBB7).